The following is a 327-amino-acid chain: Aspartate--ammonia ligase (327 aa).

Belongs to the class-II aminoacyl-tRNA synthetase family. AsnA subfamily.

The protein resides in the cytoplasm. It carries out the reaction L-aspartate + NH4(+) + ATP = L-asparagine + AMP + diphosphate + H(+). Its pathway is amino-acid biosynthesis; L-asparagine biosynthesis; L-asparagine from L-aspartate (ammonia route): step 1/1. The polypeptide is Aspartate--ammonia ligase (Bacillus cytotoxicus (strain DSM 22905 / CIP 110041 / 391-98 / NVH 391-98)).